Here is a 79-residue protein sequence, read N- to C-terminus: MSRVCELTGKRAMVGNNVSHAMNKTKRKFNANLVKKRFFLPEEDRWVTLKVCTSALKDINKKGISAVIKEAKAKGFLQK.

Belongs to the bacterial ribosomal protein bL28 family.

This Christiangramia forsetii (strain DSM 17595 / CGMCC 1.15422 / KT0803) (Gramella forsetii) protein is Large ribosomal subunit protein bL28.